The chain runs to 240 residues: Ribosomal RNA small subunit methyltransferase G (240 aa).

Residues Gly80, Phe85, Asp103–Ser105, Ala131–Glu132, and Arg150 each bind S-adenosyl-L-methionine.

The protein belongs to the methyltransferase superfamily. RNA methyltransferase RsmG family.

It localises to the cytoplasm. Specifically methylates the N7 position of a guanine in 16S rRNA. In Thermoanaerobacter sp. (strain X514), this protein is Ribosomal RNA small subunit methyltransferase G.